The following is a 347-amino-acid chain: Protein-glutamate methylesterase/protein-glutamine glutaminase 1 (347 aa).

Residues 6 to 123 (RVLVVDDSAT…LRPFGDLAEK (118 aa)) form the Response regulatory domain. Position 57 is a 4-aspartylphosphate (D57). Positions 150–342 (FRVGRKIVAI…EEILKMTAAR (193 aa)) constitute a CheB-type methylesterase domain. Active-site residues include S162, H188, and D284.

It belongs to the CheB family. In terms of processing, phosphorylated by CheA. Phosphorylation of the N-terminal regulatory domain activates the methylesterase activity.

The protein resides in the cytoplasm. The enzyme catalyses [protein]-L-glutamate 5-O-methyl ester + H2O = L-glutamyl-[protein] + methanol + H(+). The catalysed reaction is L-glutaminyl-[protein] + H2O = L-glutamyl-[protein] + NH4(+). Functionally, involved in chemotaxis. Part of a chemotaxis signal transduction system that modulates chemotaxis in response to various stimuli. Catalyzes the demethylation of specific methylglutamate residues introduced into the chemoreceptors (methyl-accepting chemotaxis proteins or MCP) by CheR. Also mediates the irreversible deamidation of specific glutamine residues to glutamic acid. In Rhizobium johnstonii (strain DSM 114642 / LMG 32736 / 3841) (Rhizobium leguminosarum bv. viciae), this protein is Protein-glutamate methylesterase/protein-glutamine glutaminase 1.